Reading from the N-terminus, the 492-residue chain is Coagulation factor X (492 aa).

The signal sequence occupies residues 1–23; the sequence is MAGLLHLVLLSTALGGLLRPAGS. A propeptide spanning residues 24-40 is cleaved from the precursor; it reads VFLPRDQAHRVLQRARR. The 45-residue stretch at 41 to 85 folds into the Gla domain; it reads ANSFLEEVKQGNLERECLEEACSLEEAREVFEDAEQTDEFWSKYK. 4-carboxyglutamate occurs at positions 46, 47, 54, 56, 59, 60, 65, 66, 69, 72, 75, and 79. A disulfide bridge connects residues cysteine 57 and cysteine 62. Positions 86–122 constitute an EGF-like 1; calcium-binding domain; sequence DGDQCEGHPCLNQGHCKDGIGDYTCTCAEGFEGKNCE. Disulfide bonds link cysteine 90–cysteine 101, cysteine 95–cysteine 110, cysteine 112–cysteine 121, cysteine 129–cysteine 140, cysteine 136–cysteine 149, cysteine 151–cysteine 164, cysteine 172–cysteine 341, cysteine 240–cysteine 245, cysteine 260–cysteine 276, cysteine 389–cysteine 403, and cysteine 414–cysteine 442. The residue at position 103 (aspartate 103) is a (3R)-3-hydroxyaspartate. The 41-residue stretch at 125 to 165 folds into the EGF-like 2 domain; sequence TREICSLDNGGCDQFCREERSEVRCSCAHGYVLGDDSKSCV. The propeptide at 183 to 233 is activation peptide; sequence WAIHTSEDALDASELEHYDPADLSPTESSLDLLGLNRTEPSAGEDGSQVVR. Tyrosine 200 carries the post-translational modification Sulfotyrosine. O-linked (GalNAc...) threonine glycosylation occurs at threonine 208. Asparagine 218 is a glycosylation site (N-linked (GlcNAc...) asparagine). In terms of domain architecture, Peptidase S1 spans 234–466; sequence IVGGRDCAEG…FLKWIDKIMK (233 aa). Residues histidine 275 and aspartate 321 each act as charge relay system in the active site. Serine 418 serves as the catalytic Charge relay system. The disordered stretch occupies residues 472–492; the sequence is AGSRGHSEAPATWTVPPPLPL. Residues 476 to 492 constitute a propeptide, may be removed but is not necessary for activation; sequence GHSEAPATWTVPPPLPL. An O-linked (GalNAc...) threonine glycan is attached at threonine 485.

Belongs to the peptidase S1 family. The two chains are formed from a single-chain precursor by the excision of two Arg residues and are held together by 1 or more disulfide bonds. Forms a heterodimer with SERPINA5. Interacts (activated) with guianensin, an anticoagulant protein from Simulium guianense saliva. Interacts (activated) with simukunin, an anticoagulant protein from Simulium vittatum saliva. The vitamin K-dependent, enzymatic carboxylation of some glutamate residues allows the modified protein to bind calcium. In terms of processing, N- and O-glycosylated. Post-translationally, proteolytically cleaved and activated by cathepsin CTSG. The activation peptide is cleaved by factor IXa (in the intrinsic pathway), or by factor VIIa (in the extrinsic pathway). The iron and 2-oxoglutarate dependent 3-hydroxylation of aspartate and asparagine is (R) stereospecific within EGF domains.

The protein resides in the secreted. The enzyme catalyses Selective cleavage of Arg-|-Thr and then Arg-|-Ile bonds in prothrombin to form thrombin.. With respect to regulation, inhibited by SERPINA5. Factor Xa is a vitamin K-dependent glycoprotein that converts prothrombin to thrombin in the presence of factor Va, calcium and phospholipid during blood clotting. Factor Xa activates pro-inflammatory and pro-fibrotic signaling pathways in a protease-activated receptor (PAR)-dependent manner. The sequence is that of Coagulation factor X (F10) from Bos taurus (Bovine).